The primary structure comprises 249 residues: MSAPGMDKRKLSTSGDSLYEILGLPKTATGDDIKKTYRKLALKYHPDKNPDNVDAADKFKEVNRAHSILSNQTKRNIYDNYGSLGLYIAEQFGEENVNAYFVVTSPAVKAVVICCAVITGCCCCCCCCCCCNFCCGKFKPPVNESHDQYSHLNRPDGNREGNDMPTHLGQPPRLEDVDLDDVNLGAGGAPVTSQPREQAGGQPVFAMPPPSGAVGVNPFTGAPVAANENTSLNTTEQTTYTPDMVNQKY.

Serine 12 carries the post-translational modification Phosphoserine. Position 13 is a phosphothreonine (threonine 13). Phosphoserine is present on residues serine 14 and serine 17. The region spanning 15–84 (GDSLYEILGL…RNIYDNYGSL (70 aa)) is the J domain. The residue at position 19 (tyrosine 19) is a Phosphotyrosine. Positions 146–162 (HDQYSHLNRPDGNREGN) are enriched in basic and acidic residues. Disordered stretches follow at residues 146-177 (HDQY…LEDV) and 218-249 (PFTG…NQKY). The span at 227–241 (NENTSLNTTEQTTYT) shows a compositional bias: polar residues.

Fatty acylated. Heavily palmitoylated in the cysteine string motif. Expressed in wide range of synaptic terminals: embryonic nervous system, larval neuromuscular junctions, adult visual system (neuropil of optic ganglia and terminal of R1-8 photoreceptors) and thoracic neuromuscular junctions. Also expressed in non-neuronal cells: follicle cells, spermatheca, testis and ejaculatory bulb. Low level of expression is found in many neuronal and non-neuronal tissues.

The protein resides in the membrane. Functionally, may have an important role in presynaptic function. The protein is DnaJ homolog subfamily C member 5 homolog of Drosophila melanogaster (Fruit fly).